The chain runs to 703 residues: Elongation factor G 1 (703 aa).

A tr-type G domain is found at E8–V291. GTP is bound by residues A17–T24, D88–H92, and N142–D145.

The protein belongs to the TRAFAC class translation factor GTPase superfamily. Classic translation factor GTPase family. EF-G/EF-2 subfamily.

The protein resides in the cytoplasm. Functionally, catalyzes the GTP-dependent ribosomal translocation step during translation elongation. During this step, the ribosome changes from the pre-translocational (PRE) to the post-translocational (POST) state as the newly formed A-site-bound peptidyl-tRNA and P-site-bound deacylated tRNA move to the P and E sites, respectively. Catalyzes the coordinated movement of the two tRNA molecules, the mRNA and conformational changes in the ribosome. The sequence is that of Elongation factor G 1 from Burkholderia orbicola (strain AU 1054).